We begin with the raw amino-acid sequence, 715 residues long: Methionine--tRNA ligase (715 aa).

A 'HIGH' region motif is present at residues 20–30 (PYANGKAHIGH). Zn(2+)-binding residues include Cys151, Cys154, Cys163, and Cys167. The 'KMSKS' region signature appears at 334–338 (KFSKT). Lys337 is a binding site for ATP. A disordered region spans residues 559-593 (ANAKRNGVKGGEKEPSKSEGMGPSEASKASEKTVD). The 103-residue stretch at 613–715 (DFAKLDIRVG…KEIKSGSRIR (103 aa)) folds into the tRNA-binding domain.

The protein belongs to the class-I aminoacyl-tRNA synthetase family. MetG type 1 subfamily. Homodimer. Zn(2+) serves as cofactor.

The protein resides in the cytoplasm. The catalysed reaction is tRNA(Met) + L-methionine + ATP = L-methionyl-tRNA(Met) + AMP + diphosphate. Functionally, is required not only for elongation of protein synthesis but also for the initiation of all mRNA translation through initiator tRNA(fMet) aminoacylation. The protein is Methionine--tRNA ligase of Methanosarcina mazei (strain ATCC BAA-159 / DSM 3647 / Goe1 / Go1 / JCM 11833 / OCM 88) (Methanosarcina frisia).